Reading from the N-terminus, the 1070-residue chain is DNA-directed RNA polymerase subunit beta (1070 aa).

Belongs to the RNA polymerase beta chain family. In plastids the minimal PEP RNA polymerase catalytic core is composed of four subunits: alpha, beta, beta', and beta''. When a (nuclear-encoded) sigma factor is associated with the core the holoenzyme is formed, which can initiate transcription.

Its subcellular location is the plastid. The protein localises to the chloroplast. The catalysed reaction is RNA(n) + a ribonucleoside 5'-triphosphate = RNA(n+1) + diphosphate. In terms of biological role, DNA-dependent RNA polymerase catalyzes the transcription of DNA into RNA using the four ribonucleoside triphosphates as substrates. This Daucus carota (Wild carrot) protein is DNA-directed RNA polymerase subunit beta.